The following is a 330-amino-acid chain: AH receptor-interacting protein (330 aa).

In terms of domain architecture, PPIase FKBP-type spans 31–121 (GTKATFHFRT…KDPLEGQRHC (91 aa)). Phosphoserine is present on S43. TPR repeat units follow at residues 179-212 (VPLIHQEGNRLYREGQVKEAAAKYYDAIACLKNL), 231-264 (TPLLLNYCQCKLVAQEYYEVLDHCSSILNKYDDN), and 265-298 (VKAYFKRGKAHAAVWNAQEAQADFAKVLELDPAL).

Interacts with RET in the pituitary gland; this interaction prevents the formation of the AIP-survivin complex.

Its subcellular location is the cytoplasm. Its function is as follows. May play a positive role in AHR-mediated (aromatic hydrocarbon receptor) signaling, possibly by influencing its receptivity for ligand and/or its nuclear targeting. The chain is AH receptor-interacting protein (Aip) from Rattus norvegicus (Rat).